The following is a 427-amino-acid chain: Adenylosuccinate synthetase (427 aa).

GTP is bound by residues Gly-12–Lys-18 and Gly-40–Thr-42. The active-site Proton acceptor is Asp-13. Residues Asp-13 and Gly-40 each coordinate Mg(2+). Residues Asp-13–Lys-16, Asn-38–His-41, Thr-126, Arg-140, Gln-221, Thr-236, and Arg-299 contribute to the IMP site. The active-site Proton donor is His-41. Ser-295–Arg-301 contributes to the substrate binding site. GTP-binding positions include Arg-301, Lys-327–Asp-329, and Ser-409–Gly-411.

The protein belongs to the adenylosuccinate synthetase family. As to quaternary structure, homodimer. Requires Mg(2+) as cofactor.

The protein resides in the cytoplasm. It catalyses the reaction IMP + L-aspartate + GTP = N(6)-(1,2-dicarboxyethyl)-AMP + GDP + phosphate + 2 H(+). The protein operates within purine metabolism; AMP biosynthesis via de novo pathway; AMP from IMP: step 1/2. Functionally, plays an important role in the de novo pathway of purine nucleotide biosynthesis. Catalyzes the first committed step in the biosynthesis of AMP from IMP. The polypeptide is Adenylosuccinate synthetase (Borrelia duttonii (strain Ly)).